The sequence spans 216 residues: UPF0502 protein VPA1223 (216 aa).

This sequence belongs to the UPF0502 family.

This chain is UPF0502 protein VPA1223, found in Vibrio parahaemolyticus serotype O3:K6 (strain RIMD 2210633).